Reading from the N-terminus, the 389-residue chain is Gustatory receptor for bitter taste 22e (389 aa).

At 1 to 14 (MFRPSGSGYRQKWT) the chain is on the cytoplasmic side. Residues 15-35 (GLTLKGALYGSWILGVFPFAY) form a helical membrane-spanning segment. The Extracellular portion of the chain corresponds to 36 to 46 (DSWTRTLRRSK). The chain crosses the membrane as a helical span at residues 47–67 (WLIAYGFVLNAAFILLVVTND). Topologically, residues 68–142 (TESETPLRME…SLEECISFDR (75 aa)) are cytoplasmic. A helical membrane pass occupies residues 143–163 (FVLYKGFSVVLELVSMLVLEL). At 164–170 (GMSPNYS) the chain is on the extracellular side. A glycan (N-linked (GlcNAc...) asparagine) is linked at Asn-168. Residues 171 to 191 (AQFFIGLGSLCLMLLAVLLGA) traverse the membrane as a helical segment. The Cytoplasmic portion of the chain corresponds to 192–254 (SHFHLAVVFV…QRLASIYDYQ (63 aa)). The helical transmembrane segment at 255-275 (MVMVMVSFLIANVLGIYFFII) threads the bilayer. At 276–287 (YSISLNKSLDFK) the chain is on the extracellular side. N-linked (GlcNAc...) asparagine glycosylation is present at Asn-281. Residues 288-308 (ILVFVQALVINMLDFWLNVEI) form a helical membrane-spanning segment. Topologically, residues 309–366 (CELAERTGRQTSTILKLFNDIENIDEKLERSITDFALFCSHRRLRFHHCGLFYVNYEM) are cytoplasmic. The helical transmembrane segment at 367–387 (GFRMAITSFLYLLFLIQFDYW) threads the bilayer. The Extracellular portion of the chain corresponds to 388 to 389 (NL).

This sequence belongs to the insect chemoreceptor superfamily. Gustatory receptor (GR) family. Gr22e subfamily. In terms of tissue distribution, taste bristles on the labial palp, labral and cibarial sense organs, chemosensory bristles on the leg and anterior wing margin. In larvae, is expressed in neurons of the terminal external chemosensory organ and in the dorsal pharyngeal sense organ. Neurons expressing Gr22e also express Gr66a and correspond to taste neurons that mediate sensitivity to bitter compounds.

Its subcellular location is the cell membrane. Gustatory receptor which mediates acceptance or avoidance behavior, depending on its substrates. Seems to be involved in the sensing of bitter taste since it is expressed in neurons that mediate sensitivity to bitter compounds which are also avoidance-type taste neurons. The chain is Gustatory receptor for bitter taste 22e (Gr22e) from Drosophila melanogaster (Fruit fly).